We begin with the raw amino-acid sequence, 183 residues long: D-glycero-alpha-D-manno-heptose-1,7-bisphosphate 7-phosphatase (183 aa).

Residues cysteine 93, histidine 95, cysteine 108, and cysteine 110 each contribute to the Zn(2+) site.

Belongs to the GmhB family.

The protein localises to the cytoplasm. The catalysed reaction is D-glycero-alpha-D-manno-heptose 1,7-bisphosphate + H2O = D-glycero-alpha-D-manno-heptose 1-phosphate + phosphate. The protein operates within nucleotide-sugar biosynthesis; GDP-D-glycero-alpha-D-manno-heptose biosynthesis; GDP-D-glycero-alpha-D-manno-heptose from D-glycero-alpha-D-manno-heptose 7-phosphate: step 2/3. Functionally, converts the D-glycero-alpha-D-manno-heptose 1,7-bisphosphate intermediate into D-glycero-alpha-D-manno-heptose 1-phosphate by removing the phosphate group at the C-7 position. In Photorhabdus laumondii subsp. laumondii (strain DSM 15139 / CIP 105565 / TT01) (Photorhabdus luminescens subsp. laumondii), this protein is D-glycero-alpha-D-manno-heptose-1,7-bisphosphate 7-phosphatase (gmhB2).